Consider the following 121-residue polypeptide: MARVTVDDCVQHVSNRFELVILAAKRARQLAKGAEPEVSVDRDKNTVVALREIAESKLNMDDLRRMEETVVEEEVVDEVIRFEIADLAVSDDLADGDAANDLQGEEDDLGLGLDEAEDLGF.

The interval 95 to 121 (DGDAANDLQGEEDDLGLGLDEAEDLGF) is disordered. Residues 103–121 (QGEEDDLGLGLDEAEDLGF) are compositionally biased toward acidic residues.

Belongs to the RNA polymerase subunit omega family. The RNAP catalytic core consists of 2 alpha, 1 beta, 1 beta' and 1 omega subunit. When a sigma factor is associated with the core the holoenzyme is formed, which can initiate transcription.

It catalyses the reaction RNA(n) + a ribonucleoside 5'-triphosphate = RNA(n+1) + diphosphate. Promotes RNA polymerase assembly. Latches the N- and C-terminal regions of the beta' subunit thereby facilitating its interaction with the beta and alpha subunits. In Magnetococcus marinus (strain ATCC BAA-1437 / JCM 17883 / MC-1), this protein is DNA-directed RNA polymerase subunit omega.